Reading from the N-terminus, the 550-residue chain is Chaperonin GroEL 2 (550 aa).

ATP contacts are provided by residues 30–33 (TLGP), lysine 51, 87–91 (DGTTT), glycine 415, and aspartate 496.

The protein belongs to the chaperonin (HSP60) family. Forms a cylinder of 14 subunits composed of two heptameric rings stacked back-to-back. Interacts with the co-chaperonin GroES.

It localises to the cytoplasm. It catalyses the reaction ATP + H2O + a folded polypeptide = ADP + phosphate + an unfolded polypeptide.. Its function is as follows. Together with its co-chaperonin GroES, plays an essential role in assisting protein folding. The GroEL-GroES system forms a nano-cage that allows encapsulation of the non-native substrate proteins and provides a physical environment optimized to promote and accelerate protein folding. This chain is Chaperonin GroEL 2, found in Bradyrhizobium diazoefficiens (strain JCM 10833 / BCRC 13528 / IAM 13628 / NBRC 14792 / USDA 110).